A 107-amino-acid polypeptide reads, in one-letter code: Putative pterin-4-alpha-carbinolamine dehydratase (107 aa).

This sequence belongs to the pterin-4-alpha-carbinolamine dehydratase family.

The catalysed reaction is (4aS,6R)-4a-hydroxy-L-erythro-5,6,7,8-tetrahydrobiopterin = (6R)-L-erythro-6,7-dihydrobiopterin + H2O. The sequence is that of Putative pterin-4-alpha-carbinolamine dehydratase from Rubrobacter xylanophilus (strain DSM 9941 / JCM 11954 / NBRC 16129 / PRD-1).